We begin with the raw amino-acid sequence, 688 residues long: Glycine--tRNA ligase beta subunit (688 aa).

Belongs to the class-II aminoacyl-tRNA synthetase family. Tetramer of two alpha and two beta subunits.

It localises to the cytoplasm. The catalysed reaction is tRNA(Gly) + glycine + ATP = glycyl-tRNA(Gly) + AMP + diphosphate. This chain is Glycine--tRNA ligase beta subunit, found in Listeria monocytogenes serotype 4a (strain HCC23).